Here is a 164-residue protein sequence, read N- to C-terminus: Lipoprotein signal peptidase (164 aa).

Transmembrane regions (helical) follow at residues 8-28 (IVAA…LLFV), 39-59 (VTPF…GWFQ), 64-84 (VGAT…AIWM), and 91-111 (LATI…IDRF). Active-site residues include aspartate 118 and aspartate 140. The chain crosses the membrane as a helical span at residues 131-151 (YSWYVFNLADVAIVAGVIALL).

This sequence belongs to the peptidase A8 family.

The protein localises to the cell inner membrane. It catalyses the reaction Release of signal peptides from bacterial membrane prolipoproteins. Hydrolyzes -Xaa-Yaa-Zaa-|-(S,diacylglyceryl)Cys-, in which Xaa is hydrophobic (preferably Leu), and Yaa (Ala or Ser) and Zaa (Gly or Ala) have small, neutral side chains.. It functions in the pathway protein modification; lipoprotein biosynthesis (signal peptide cleavage). Its function is as follows. This protein specifically catalyzes the removal of signal peptides from prolipoproteins. This is Lipoprotein signal peptidase from Nitrobacter hamburgensis (strain DSM 10229 / NCIMB 13809 / X14).